Here is a 361-residue protein sequence, read N- to C-terminus: Chorismate synthase (361 aa).

R48 and R54 together coordinate NADP(+). Residues 125 to 127, 238 to 239, G278, 293 to 297, and R319 contribute to the FMN site; these read RSS, NA, and KPTSS.

It belongs to the chorismate synthase family. Homotetramer. Requires FMNH2 as cofactor.

It catalyses the reaction 5-O-(1-carboxyvinyl)-3-phosphoshikimate = chorismate + phosphate. It functions in the pathway metabolic intermediate biosynthesis; chorismate biosynthesis; chorismate from D-erythrose 4-phosphate and phosphoenolpyruvate: step 7/7. In terms of biological role, catalyzes the anti-1,4-elimination of the C-3 phosphate and the C-6 proR hydrogen from 5-enolpyruvylshikimate-3-phosphate (EPSP) to yield chorismate, which is the branch point compound that serves as the starting substrate for the three terminal pathways of aromatic amino acid biosynthesis. This reaction introduces a second double bond into the aromatic ring system. The sequence is that of Chorismate synthase from Sodalis glossinidius (strain morsitans).